Here is a 150-residue protein sequence, read N- to C-terminus: UPF0098 protein CT_736 (150 aa).

Belongs to the UPF0098 family.

This is UPF0098 protein CT_736 from Chlamydia trachomatis serovar D (strain ATCC VR-885 / DSM 19411 / UW-3/Cx).